The chain runs to 99 residues: Aspartyl/glutamyl-tRNA(Asn/Gln) amidotransferase subunit C (99 aa).

Belongs to the GatC family. In terms of assembly, heterotrimer of A, B and C subunits.

The enzyme catalyses L-glutamyl-tRNA(Gln) + L-glutamine + ATP + H2O = L-glutaminyl-tRNA(Gln) + L-glutamate + ADP + phosphate + H(+). It catalyses the reaction L-aspartyl-tRNA(Asn) + L-glutamine + ATP + H2O = L-asparaginyl-tRNA(Asn) + L-glutamate + ADP + phosphate + 2 H(+). Its function is as follows. Allows the formation of correctly charged Asn-tRNA(Asn) or Gln-tRNA(Gln) through the transamidation of misacylated Asp-tRNA(Asn) or Glu-tRNA(Gln) in organisms which lack either or both of asparaginyl-tRNA or glutaminyl-tRNA synthetases. The reaction takes place in the presence of glutamine and ATP through an activated phospho-Asp-tRNA(Asn) or phospho-Glu-tRNA(Gln). This Methylibium petroleiphilum (strain ATCC BAA-1232 / LMG 22953 / PM1) protein is Aspartyl/glutamyl-tRNA(Asn/Gln) amidotransferase subunit C.